The following is a 405-amino-acid chain: Cytochrome P450 109 (405 aa).

A heme-binding site is contributed by cysteine 351.

This sequence belongs to the cytochrome P450 family. It depends on heme as a cofactor.

Cytochromes P450 are a group of heme-thiolate monooxygenases. They oxidize a variety of structurally unrelated compounds, including steroids, fatty acids, and xenobiotics. In Bacillus spizizenii (strain ATCC 23059 / NRRL B-14472 / W23) (Bacillus subtilis subsp. spizizenii), this protein is Cytochrome P450 109 (cyp109).